The chain runs to 952 residues: Meiosis-specific coiled-coil domain-containing protein MEIOC (952 aa).

Disordered regions lie at residues 1 to 23, 609 to 629, and 933 to 952; these read MEVR…EGLE, QAKP…LDGL, and VHES…TNKH. Positions 617–627 are enriched in basic and acidic residues; the sequence is YDPEEGPKHLD. A compositionally biased stretch (polar residues) spans 936 to 952; the sequence is SINSSNPMNQRGETNKH.

Interacts with YTHDC2; binds transcript that regulate the mitotic cell cycle inhibiting progression into metaphase, thereby allowing meiotic prophase to proceed normally. Interacts with RBM46. In terms of tissue distribution, expressed in fetal ovaries. Expressed in testis.

Its subcellular location is the cytoplasm. The protein localises to the nucleus. Is required for meiosis completion in both male and female germ cells. Confers stability to numerous meiotic mRNAs in gonads allowing proper initiation and progression into meiosis prophase I. The function may involve YTHDC2 and is independent of induction by retinoic acid (RA). Maintains an extended meiotic prophase I by properly promoting the transition from a mitotic to a meiotic cell cycle program by binding transcripts through its interaction with YTHDC2 that regulate the mitotic cell cycle. The chain is Meiosis-specific coiled-coil domain-containing protein MEIOC from Homo sapiens (Human).